The chain runs to 59 residues: Large ribosomal subunit protein bL32 (59 aa).

Residues 1–15 (MAVPKKKTSKSKRDM) are compositionally biased toward basic residues. Residues 1–26 (MAVPKKKTSKSKRDMRRATWNRKAAA) form a disordered region.

The protein belongs to the bacterial ribosomal protein bL32 family.

The chain is Large ribosomal subunit protein bL32 from Cyanothece sp. (strain PCC 7425 / ATCC 29141).